The primary structure comprises 237 residues: Probable 2-phosphosulfolactate phosphatase (237 aa).

This sequence belongs to the ComB family. The cofactor is Mg(2+).

The enzyme catalyses (2R)-O-phospho-3-sulfolactate + H2O = (2R)-3-sulfolactate + phosphate. The chain is Probable 2-phosphosulfolactate phosphatase from Thermus thermophilus (strain ATCC 27634 / DSM 579 / HB8).